The sequence spans 359 residues: 3-isopropylmalate dehydrogenase (359 aa).

Substrate is bound by residues Arg96, Arg106, Arg134, and Asp223. Residues Asp223, Asp247, and Asp251 each coordinate Mg(2+). Residue 281 to 293 (GSAPDIAGQGIAN) coordinates NAD(+).

It belongs to the isocitrate and isopropylmalate dehydrogenases family. LeuB type 1 subfamily. In terms of assembly, homodimer. The cofactor is Mg(2+). It depends on Mn(2+) as a cofactor.

It is found in the cytoplasm. It catalyses the reaction (2R,3S)-3-isopropylmalate + NAD(+) = 4-methyl-2-oxopentanoate + CO2 + NADH. It participates in amino-acid biosynthesis; L-leucine biosynthesis; L-leucine from 3-methyl-2-oxobutanoate: step 3/4. In terms of biological role, catalyzes the oxidation of 3-carboxy-2-hydroxy-4-methylpentanoate (3-isopropylmalate) to 3-carboxy-4-methyl-2-oxopentanoate. The product decarboxylates to 4-methyl-2 oxopentanoate. In Chromohalobacter salexigens (strain ATCC BAA-138 / DSM 3043 / CIP 106854 / NCIMB 13768 / 1H11), this protein is 3-isopropylmalate dehydrogenase.